The chain runs to 370 residues: MPHQQILMLFGLLPVATNISTWWNFGSMLLACSTLQVLTGFFLAVHYTANINMAFSSIIHITRDVPYGWLMQNLHAIGASMFFICIYIHIARGLYYGSYLNKETWLSGTTLLIMLMATAFFGYVLPWGQMSFWAATVITNLLTAIPYLGSTMTTWLWGGFAINDPTLTRFFALHFILPFGIISLSSLHILLLHEEGSSNPLGTNSDIDKIPFHPYQTYKDLLMLAMLTTLLLMIVSFFPDIFNDPDNFSKANPLVTPQHIKPEWYFLFAYGILRSIPNKLGGALALTMSIMILLTVPFTHTSKLRSMMFRPLMQLMFWTFAATFLVISWSSTKPVEPPFTTISQAAALMYFLFFISKPLMGLMENKIMKT.

A run of 4 helical transmembrane segments spans residues 25–45, 69–90, 105–125, and 170–190; these read FGSMLLACSTLQVLTGFFLAV, WLMQNLHAIGASMFFICIYIHI, WLSGTTLLIMLMATAFFGYVL, and FFALHFILPFGIISLSSLHIL. Positions 75 and 89 each coordinate heme b. The heme b site is built by His-174 and His-188. His-193 is a binding site for a ubiquinone. 4 helical membrane-spanning segments follow: residues 218-238, 280-300, 312-332, and 339-358; these read YKDLLMLAMLTTLLLMIVSFF, LGGALALTMSIMILLTVPFTH, LMQLMFWTFAATFLVISWSST, and FTTISQAAALMYFLFFISKP.

It belongs to the cytochrome b family. The cytochrome bc1 complex contains 3 respiratory subunits (MT-CYB, CYC1 and UQCRFS1), 2 core proteins (UQCRC1 and UQCRC2) and probably 6 low-molecular weight proteins. Heme b serves as cofactor.

It localises to the mitochondrion inner membrane. Its function is as follows. Component of the ubiquinol-cytochrome c reductase complex (complex III or cytochrome b-c1 complex) that is part of the mitochondrial respiratory chain. The b-c1 complex mediates electron transfer from ubiquinol to cytochrome c. Contributes to the generation of a proton gradient across the mitochondrial membrane that is then used for ATP synthesis. In Chilabothrus subflavus (Jamaican yellow boa), this protein is Cytochrome b (MT-CYB).